A 424-amino-acid polypeptide reads, in one-letter code: Virion nicking-joining enzyme (424 aa).

PLD phosphodiesterase domains lie at 110-137 (LGGV…DWRS) and 320-346 (YSRV…TGNY).

The protein belongs to the orthopoxvirus OPG042 family.

The protein localises to the virion. DNA nicking enzyme that cleaves extruded cruciform DNA at its tip. Probably nicks viral hairpins. The protein is Virion nicking-joining enzyme (OPG042) of Vaccinia virus (strain Western Reserve) (VACV).